Consider the following 293-residue polypeptide: Pyridoxal 5'-phosphate synthase subunit PdxS (293 aa).

D25 lines the D-ribose 5-phosphate pocket. K82 (schiff-base intermediate with D-ribose 5-phosphate) is an active-site residue. Position 103 (D103) interacts with D-ribulose 5-phosphate. D-ribose 5-phosphate is bound at residue G154. A D-glyceraldehyde 3-phosphate-binding site is contributed by R166. D-ribose 5-phosphate contacts are provided by residues G215 and 236-237 (GS).

It belongs to the PdxS/SNZ family. In terms of assembly, homohexamer and homododecamer. In the presence of PdxT, forms a dodecamer of heterodimers.

It catalyses the reaction aldehydo-D-ribose 5-phosphate + D-glyceraldehyde 3-phosphate + L-glutamine = pyridoxal 5'-phosphate + L-glutamate + phosphate + 3 H2O + H(+). Its pathway is cofactor biosynthesis; pyridoxal 5'-phosphate biosynthesis. Catalyzes the formation of pyridoxal 5'-phosphate from ribose 5-phosphate (RBP), glyceraldehyde 3-phosphate (G3P) and ammonia. The ammonia is provided by the PdxT subunit. Can also use ribulose 5-phosphate and dihydroxyacetone phosphate as substrates, resulting from enzyme-catalyzed isomerization of RBP and G3P, respectively. In Thermotoga maritima (strain ATCC 43589 / DSM 3109 / JCM 10099 / NBRC 100826 / MSB8), this protein is Pyridoxal 5'-phosphate synthase subunit PdxS.